The following is a 91-amino-acid chain: Putative defensin-like protein 145 (91 aa).

The N-terminal stretch at 1–26 is a signal peptide; the sequence is MNKNIIFSFTVLTLFVIFVQVTGVIG. Residues asparagine 35 and asparagine 68 are each glycosylated (N-linked (GlcNAc...) asparagine). Disulfide bonds link cysteine 39–cysteine 84, cysteine 52–cysteine 74, cysteine 57–cysteine 78, and cysteine 61–cysteine 80.

The protein belongs to the DEFL family.

Its subcellular location is the secreted. The polypeptide is Putative defensin-like protein 145 (LCR2) (Arabidopsis thaliana (Mouse-ear cress)).